We begin with the raw amino-acid sequence, 568 residues long: MVFTSPSWCQDILMPIPNNELVGEFVMRRGHGLNDVSEDSPSSVCAYTGKSYSIRDIRHNVKSLSKSLSQILGWDFNHGNPEDKVVAVCSLNSIDYVPLTWAIHRLGGICLLLHPTSSASELETLMRKANCKAVFTCKPLMAQCQAAFTAINGDPSNIFLVELPLPEEQPVKISNTTISQLIADGEGLPDLQPLDLQDFDSKERLAYFCPTSGTSGFLKIAKVSHANVMANILQCTTMDSYTTASQTDVTLGILPLSHAYGLLVQHFVTFRGDCIILHPKFDMQIALKSVQQYRIVRLYLVPTIIGALATNPILFKLFDLSSVKRVITGSASLPEQVSKAINQLCPEWEINPGYGLTESFVCMSWTSPNSQYPGSTGCLLPLVEARLLDADGSDITAHGQAGDLLVRSPSVMKEYLDDDLKRDVTFDSDGWLRTGDVATFKQNPKGDSHLFIVDRKKDIMKVKGIQVPPVEIEGHLVAHPAVDDAAVVAISDEDAGERPFAFVVRSQKVMTDIDEKSLKKDISGYIQSTLSEPYWLRQNIRFIDAIPKSHNGKALKFKLKQQLVTSSA.

ATP is bound by residues 211-219 (TSGTSGFLK), 352-357 (PGYGLT), D436, R455, and K553. The interval 282 to 352 (DMQIALKSVQ…QLCPEWEINP (71 aa)) is SBD1. The tract at residues 353–415 (GYGLTESFVC…VRSPSVMKEY (63 aa)) is SBD2.

The protein belongs to the ATP-dependent AMP-binding enzyme family.

Its pathway is mycotoxin biosynthesis. Acyl-CoA ligase; part of the gene cluster that mediates the biosynthesis of pneumocandins, lipohexapeptides of the echinocandin family that prevent fungal cell wall formation by non-competitive inhibition of beta-1,3-glucan synthase. The 10,12-dimethylmyristoyl side chain is synthesized by the reducing polyketide synthase gloL/GLPKS4. The thioesterase gloN/GLHYD exclusively interacts with gloL/GLPKS4 to maintain turnover of the polyketide side chain. The 10R,12S-dimethylmyristic acid is then transferred to the first thiolation domain of the nonribosomal peptide synthetase gloA/GLNRPS4 by the acyl-AMP ligase gloD/GLligase, followed by its acylation to L-ornithine to trigger elongation of the cyclic hexapeptide. L-ornithine, 4R-hydroxyl-L-proline (generated from L-proline by the dioxygenase gloF/GLOXY2), 3S-hydroxyl-L-homotyrosine (generated by gloG/GLHtyB, gloH/GLHtyA, gloI/GLHtyC, gloJ/GLHtyD and hydroxylated at C-3 by the dioxygenase gloM/GLOXY1), 3R-hydroxyl-L-glutamine (generated from L-glutamine probably by the dioxygenase gloE/GLOXY3) and 3S-hydroxyl-L-proline (generated from L-proline by the dioxygenase gloF/GLOXY2 to yield pneumocandin B0), or 3S-hydroxyl-4S-methyl-L-proline (generated from L-leucine by the dioxygenase gloC/GLOXY4 to yield pneumocandin A0) are sequentially added to the growing chain. The last C domain of gloA/GLNRPS4 is proposed to be responsible for cyclization by condensation to form the peptide bond between L-ornithine and 3S-hydroxyl-4S-methyl-L-proline (for pneumocandin A0) or 3S-hydroxyl-L-proline (for pneumocandin B0). Finally, the subsequent C-4 hydroxylation of 3S-hydroxyl-L-homotyrosine and L-ornithine dihydroxylation at C-4 and C-5 are performed by the cytochrome P450 monooxygenases gloP/GLP450-1 and gloO/GLP450-2, respectively. This Glarea lozoyensis (strain ATCC 20868 / MF5171) protein is Acyl-CoA ligase gloD.